Consider the following 839-residue polypeptide: Sodium/hydrogen exchanger 3 (839 aa).

The signal sequence occupies residues 1 to 32; that stretch reads MPLGVRGTRREFRFPVWGLLLLALWMLPRALG. Topologically, residues 33-56 are extracellular; sequence VEEIPGPDSHEKQGFQIVTFKWHH. The chain crosses the membrane as a helical span at residues 57 to 79; the sequence is VQDPYIIALWILVASLAKIVFHL. Residues 80–87 lie on the Cytoplasmic side of the membrane; the sequence is SHKVTSVV. Residues 88–107 form a helical membrane-spanning segment; the sequence is PESALLIVLGLILGGIVWAA. Over 108–116 the chain is Extracellular; it reads DHIASFTLT. Residues 117–134 form a helical membrane-spanning segment; that stretch reads PTVFFFYLLPPIVLDAGY. Over 135-137 the chain is Cytoplasmic; the sequence is FMP. Residues 138–173 traverse the membrane as a helical segment; the sequence is NRLFFGNLGTILLYAVIGTVWNAATTGLSLYGVYLS. The a 1,2-diacyl-sn-glycero-3-phospho-(1D-myo-inositol) site is built by Gly143, Gly146, and Thr147. The Extracellular portion of the chain corresponds to 174-186; it reads GIMGDLSIGLLDF. Residues 187–208 form a helical membrane-spanning segment; the sequence is LLFGSLIAAVDPVAVLAVFEEV. Residues 209–210 lie on the Cytoplasmic side of the membrane; sequence HV. The chain crosses the membrane as a helical span at residues 211–242; that stretch reads NDVLFIIVFGESLLNDAVTVVLYNVFDSFVSL. Over 243-249 the chain is Extracellular; the sequence is GADKVTG. A helical transmembrane segment spans residues 250-284; it reads VDCVKGIVSFFVVSLGGTLIGIIFAFLLSLVTRFT. Residues 285–286 are Cytoplasmic-facing; it reads KH. Residues 287–309 traverse the membrane as a helical segment; that stretch reads VRIIEPGFVFIISYLSYLTSEML. The Extracellular segment spans residues 310–311; the sequence is SL. The chain crosses the membrane as a helical span at residues 312 to 328; sequence SAILAITFCGICCQKYV. The Cytoplasmic portion of the chain corresponds to 329-335; sequence KANISEQ. The chain crosses the membrane as a helical span at residues 336–364; it reads SATTVRYTMKMLASGAETIIFMFLGISAV. Residues 365–372 lie on the Extracellular side of the membrane; sequence DPAIWTWN. Residues 373 to 394 form a helical membrane-spanning segment; that stretch reads TAFILLTLVFISVYRAIGVVLQ. At 395–407 the chain is on the cytoplasmic side; the sequence is TWLLNKYRMVQLE. Met403 serves as a coordination point for a 1,2-diacyl-sn-glycero-3-phospho-(1D-myo-inositol). The helical transmembrane segment at 408 to 431 threads the bilayer; it reads IIDQVVMSYGGLRGAVAYALVVLL. The Extracellular portion of the chain corresponds to 432 to 438; it reads DEKKVKE. Residues 439 to 472 form a helical membrane-spanning segment; the sequence is KNLFVSTTIIVVFFTVIFQGLTIKPLVQWLKVKK. The Cytoplasmic segment spans residues 473-839; the sequence is SEHREPKLNE…RSFLPESTHM (367 aa). The a 1,2-diacyl-sn-glycero-3-phospho-(1D-myo-inositol) site is built by Gln502, Ile503, and His505. 2 positions are modified to phosphoserine: Ser560 and Ser568. The interval 581-595 is interaction with EZR; it reads RPSTVEASVSYLLRE. An interaction with NHERF4 region spans residues 596 to 673; the sequence is NVSTVCLDMQ…RKRLESFKST (78 aa). The interaction with AHCYL1 stretch occupies residues 597 to 701; the sequence is VSTVCLDMQA…GQKRRNSSIP (105 aa). Residues Ser598 and Ser613 each carry the phosphoserine modification. Phosphoserine; by SGK1 is present on Ser669. The segment covering 688 to 697 has biased composition (basic residues); it reads KRERGQKRRN. Residues 688–710 are disordered; the sequence is KRERGQKRRNSSIPNGKIPMESP. A phosphoserine mark is found at Ser724, Ser815, and Ser818.

This sequence belongs to the monovalent cation:proton antiporter 1 (CPA1) transporter (TC 2.A.36) family. In terms of assembly, homodimer. Found in the forms of complex and dynamic macromolecular complexes. Binds NHERF1 and NHERF2. Interacts with CHP1, CHP2 and SHANK2. Interacts with NHERF4 and interactions decrease in response to elevated calcium ion levels. Interacts with PDZK1 (via C-terminal PDZ domain). Interacts with AHCYL1; the interaction is required for SLC9A3 activity. Interacts with EZR; interaction targets SLC9A3 to the apical membrane. Interacts with SNX27 (via PDZ domains); directs SLC9A3 membrane insertion from early endosomes to the plasma membrane. Phosphorylated by PKA, which inhibits activity. Phosphorylation at Ser-669 by SGK1 is associated with increased abundance at the cell membrane.

It is found in the apical cell membrane. It localises to the cell membrane. Its subcellular location is the recycling endosome membrane. The protein localises to the early endosome membrane. It carries out the reaction Na(+)(in) + H(+)(out) = Na(+)(out) + H(+)(in). With respect to regulation, seems to switch between active and inactive modes in response to various stimuli. Activated directly or indirectly by membrane phosphatidylinositol (PIs). Regulated by a variety of auxiliary proteins, which facilitate the maturation, cell surface expression and function of the transporter. Inhibited specifically by the drug tenapanor. Its function is as follows. Plasma membrane Na(+)/H(+) antiporter. Exchanges intracellular H(+) ions for extracellular Na(+) in 1:1 stoichiometry, playing a key role in salt and fluid absorption and pH homeostasis. Major apical Na(+)/H(+) exchanger in kidney and intestine playing an important role in renal and intestine Na(+) absorption and blood pressure regulation. The protein is Sodium/hydrogen exchanger 3 (SLC9A3) of Didelphis virginiana (North American opossum).